The following is an 84-amino-acid chain: Small ribosomal subunit protein bS16 (84 aa).

It belongs to the bacterial ribosomal protein bS16 family.

The protein is Small ribosomal subunit protein bS16 of Deinococcus radiodurans (strain ATCC 13939 / DSM 20539 / JCM 16871 / CCUG 27074 / LMG 4051 / NBRC 15346 / NCIMB 9279 / VKM B-1422 / R1).